A 454-amino-acid polypeptide reads, in one-letter code: Mitochondrial dynamics protein MID49 (454 aa).

At 1–22 (MAEFSQKRGKRRSDEGLGSMVD) the chain is on the mitochondrial intermembrane side. S13 bears the Phosphoserine mark. The helical transmembrane segment at 23-43 (FLLANARLVLGVGGAAVLGIA) threads the bilayer. The Cytoplasmic segment spans residues 44–454 (TLAVKRFIDR…SGLQEPEGLL (411 aa)). A disordered region spans residues 76-119 (ATPHLQPRPPPAALSQPVLPLAPSSSAPEGPAETDPEVTPQLSS). The span at 88 to 103 (ALSQPVLPLAPSSSAP) shows a compositional bias: low complexity.

Belongs to the MID49/MID51 family. As to quaternary structure, interacts with DNM1L. As to expression, expressed in all tissues tested with highest expression in heart and skeletal muscle.

Its subcellular location is the mitochondrion outer membrane. Its function is as follows. Mitochondrial outer membrane protein involved in the regulation of mitochondrial organization. It is required for mitochondrial fission and promotes the recruitment and association of the fission mediator dynamin-related protein 1 (DNM1L) to the mitochondrial surface independently of the mitochondrial fission FIS1 and MFF proteins. Regulates DNM1L GTPase activity. The chain is Mitochondrial dynamics protein MID49 (MIEF2) from Homo sapiens (Human).